Here is a 238-residue protein sequence, read N- to C-terminus: RNA-binding protein pno1 (238 aa).

The 50-residue stretch at 162–211 (QSRAIGRLAGKGGRTKFTIENVTKTRIVLADSKIHILGSYQNIQLARRAI) folds into the KH domain.

This sequence belongs to the PNO1 family.

It is found in the nucleus. The protein resides in the nucleolus. This is RNA-binding protein pno1 (l(1)G0004) from Drosophila pseudoobscura pseudoobscura (Fruit fly).